Here is a 375-residue protein sequence, read N- to C-terminus: ORC1-type DNA replication protein 3 (375 aa).

Residues 66-70 (TGKTT), Tyr209, and Arg221 each bind ATP.

The protein belongs to the CDC6/cdc18 family.

In terms of biological role, involved in regulation of DNA replication. This Haloarcula marismortui (strain ATCC 43049 / DSM 3752 / JCM 8966 / VKM B-1809) (Halobacterium marismortui) protein is ORC1-type DNA replication protein 3 (cdc6c).